A 147-amino-acid polypeptide reads, in one-letter code: Large ribosomal subunit protein uL13 (147 aa).

This sequence belongs to the universal ribosomal protein uL13 family. In terms of assembly, part of the 50S ribosomal subunit.

In terms of biological role, this protein is one of the early assembly proteins of the 50S ribosomal subunit, although it is not seen to bind rRNA by itself. It is important during the early stages of 50S assembly. In Beutenbergia cavernae (strain ATCC BAA-8 / DSM 12333 / CCUG 43141 / JCM 11478 / NBRC 16432 / NCIMB 13614 / HKI 0122), this protein is Large ribosomal subunit protein uL13.